We begin with the raw amino-acid sequence, 141 residues long: Sperm protein associated with the nucleus on the X chromosome N3 (141 aa).

Positions 1–10 are enriched in polar residues; that stretch reads MEQPTSSTNG. Disordered regions lie at residues 1 to 47 and 66 to 141; these read MEQP…TKTS and NQLE…SGED. The span at 11–26 shows a compositional bias: basic and acidic residues; it reads EKTKSPCESNNKKNDE. Positions 66 to 80 are enriched in polar residues; the sequence is NQLENEQSQENSINP. Acidic residues predominate over residues 84 to 103; sequence EEDEGVDLSEGSSNEDEDLG. Residues 132-141 are compositionally biased toward polar residues; the sequence is EGSSQDSGED.

Belongs to the SPAN-X family.

The polypeptide is Sperm protein associated with the nucleus on the X chromosome N3 (SPANXN3) (Homo sapiens (Human)).